A 489-amino-acid polypeptide reads, in one-letter code: Endoglucanase 4 (489 aa).

Residues Met-1 to Ala-25 form the signal peptide. Catalysis depends on Asp-81, which acts as the Nucleophile. His-409 is an active-site residue. Asn-453 carries N-linked (GlcNAc...) asparagine glycosylation. Residues Asp-460 and Glu-469 contribute to the active site.

Belongs to the glycosyl hydrolase 9 (cellulase E) family.

The protein resides in the secreted. The catalysed reaction is Endohydrolysis of (1-&gt;4)-beta-D-glucosidic linkages in cellulose, lichenin and cereal beta-D-glucans.. The sequence is that of Endoglucanase 4 from Arabidopsis thaliana (Mouse-ear cress).